Consider the following 327-residue polypeptide: Toluene-4-monooxygenase system, hydroxylase component subunit beta (327 aa).

The protein belongs to the TmoE/XamoE family. As to quaternary structure, the alkene monooxygenase multicomponent enzyme system is composed of an electron transfer component and a monooxygenase component interacting with the effector protein TmoD. The electron transfer component is composed of a ferredoxin reductase (TmoF) and a ferredoxin (TmoC), and the monooxygenase component is formed by a heterohexamer (dimer of heterotrimers) of two alpha subunits (TmoA), two beta subunits (TmoE) and two gamma subunits (TmoB).

The catalysed reaction is toluene + NADH + O2 + H(+) = 4-methylphenol + NAD(+) + H2O. It participates in xenobiotic degradation; toluene degradation. Its activity is regulated as follows. Inhibited by Zn(2+) and Cu(2+). Functionally, component of the toluene-4-monooxygenase multicomponent enzyme system which catalyzes the O2- and NADH-dependent hydroxylation of toluene to form p-cresol. Also able to convert benzene to phenol, catechol, and 1,2,3-trihydroxybenzene by successive hydroxylations. The polypeptide is Toluene-4-monooxygenase system, hydroxylase component subunit beta (Ectopseudomonas mendocina (Pseudomonas mendocina)).